The primary structure comprises 317 residues: Low affinity immunoglobulin gamma Fc region receptor II-a (317 aa).

Positions 1–33 are cleaved as a signal peptide; sequence MTMETQMSQNVCPRNLWLLQPLTVLLLLASADS. Residues 34–217 lie on the Extracellular side of the membrane; it reads QAAAPPKAVL…PSMGSSSPMG (184 aa). 2 Ig-like C2-type domains span residues 39 to 118 and 122 to 204; these read PKAV…VHLT and EWLV…VTIT. Cystine bridges form between Cys-62–Cys-104 and Cys-143–Cys-187. 2 N-linked (GlcNAc...) asparagine glycosylation sites follow: Asn-97 and Asn-178. A helical membrane pass occupies residues 218-240; sequence IIVAVVIATAVAAIVAAVVALIY. Over 241–317 the chain is Cytoplasmic; it reads CRKKRISANS…PPNDHVNSNN (77 aa). A phosphotyrosine; by SRC-type Tyr-kinases mark is found at Tyr-288 and Tyr-304. The disordered stretch occupies residues 292-317; sequence NPRAPTDDDKNIYLTLPPNDHVNSNN.

In terms of assembly, interacts with IGHG1. Interacts with INPP5D/SHIP1 and INPPL1/SHIP2, regulating its function. Interacts with APCS and FGR. Interacts with HCK. Post-translationally, phosphorylated by SRC-type Tyr-kinases such as LYN, BLK, FYN, HCK and SYK. As to expression, found on monocytes, neutrophils and eosinophil platelets.

It is found in the cell membrane. In terms of biological role, binds to the Fc region of immunoglobulins gamma. Low affinity receptor. By binding to IgG it initiates cellular responses against pathogens and soluble antigens. Promotes phagocytosis of opsonized antigens. The chain is Low affinity immunoglobulin gamma Fc region receptor II-a (FCGR2A) from Homo sapiens (Human).